We begin with the raw amino-acid sequence, 526 residues long: Cytochrome P450 monooxygenase patI (526 aa).

Residues 1-6 (MDILQL) are Cytoplasmic-facing. Residues 7 to 29 (APTHLLAILLSSTSALFLITYLL) form a helical membrane-spanning segment. The Lumenal portion of the chain corresponds to 30 to 526 (RAGHRPSDLP…EAQEVFARFD (497 aa)). N-linked (GlcNAc...) asparagine glycosylation is present at asparagine 81. Cysteine 446 provides a ligand contact to heme.

Belongs to the cytochrome P450 family. It depends on heme as a cofactor.

Its subcellular location is the endoplasmic reticulum membrane. It catalyses the reaction 3-hydroxybenzyl alcohol + reduced [NADPH--hemoprotein reductase] + O2 = gentisyl alcohol + oxidized [NADPH--hemoprotein reductase] + H2O + H(+). Its pathway is mycotoxin biosynthesis; patulin biosynthesis. Functionally, cytochrome P450 monooxygenase; part of the gene cluster that mediates the biosynthesis of patulin, an acetate-derived tetraketide mycotoxin produced by several fungal species that shows antimicrobial properties against several bacteria. PatI catalyzes the conversion of m-hydroxybenzyl alcohol into gentisyl alcohol. The pathway begins with the synthesis of 6-methylsalicylic acid by the polyketide synthase (PKS) patK via condensation of acetate and malonate units. The 6-methylsalicylic acid decarboxylase patG then catalyzes the decarboxylation of 6-methylsalicylic acid to yield m-cresol (also known as 3-methylphenol). These first reactions occur in the cytosol. The intermediate m-cresol is then transported into the endoplasmic reticulum where the cytochrome P450 monooxygenase patH converts it to m-hydroxybenzyl alcohol, which is further converted to gentisyl alcohol by the cytochrome P450 monooxygenase patI. The oxidoreductases patJ and patO further convert gentisyl alcohol to isoepoxydon in the vacuole. PatN catalyzes then the transformation of isoepoxydon into phyllostine. The cluster protein patF is responsible for the conversion from phyllostine to neopatulin whereas the alcohol dehydrogenase patD converts neopatulin to E-ascladiol. The steps between isoepoxydon and E-ascladiol occur in the cytosol, and E-ascladiol is probably secreted to the extracellular space by one of the cluster-specific transporters patC or patM. Finally, the secreted patulin synthase patE catalyzes the conversion of E-ascladiol to patulin. The polypeptide is Cytochrome P450 monooxygenase patI (Penicillium expansum (Blue mold rot fungus)).